Reading from the N-terminus, the 64-residue chain is Large ribosomal subunit protein bL33 (64 aa).

2 stretches are compositionally biased toward basic and acidic residues: residues 16-25 (EARTSSDPKR) and 33-42 (TTEKNRRNTT). The interval 16–42 (EARTSSDPKRSNGVSRYTTEKNRRNTT) is disordered.

This sequence belongs to the bacterial ribosomal protein bL33 family.

The sequence is that of Large ribosomal subunit protein bL33 from Prochlorococcus marinus (strain MIT 9301).